The primary structure comprises 85 residues: Small ribosomal subunit protein bS20 (85 aa).

The disordered stretch occupies residues 1–24 (MANIKSAIKRAKLSEERRSHNASI).

The protein belongs to the bacterial ribosomal protein bS20 family.

In terms of biological role, binds directly to 16S ribosomal RNA. The polypeptide is Small ribosomal subunit protein bS20 (Bacillus mycoides (strain KBAB4) (Bacillus weihenstephanensis)).